Consider the following 546-residue polypeptide: Light-independent protochlorophyllide reductase subunit B (546 aa).

Residue aspartate 36 participates in [4Fe-4S] cluster binding. Aspartate 287 functions as the Proton donor in the catalytic mechanism. Residue 422-423 participates in substrate binding; the sequence is GL. A disordered region spans residues 443 to 501; the sequence is PSHLSAHRPTGEAVGDAVGEPPAAPRDQAAPAATLDGSAAQSDPARTTPPGAPSWEDSA.

Belongs to the ChlB/BchB/BchZ family. Protochlorophyllide reductase is composed of three subunits; BchL, BchN and BchB. Forms a heterotetramer of two BchB and two BchN subunits. Requires [4Fe-4S] cluster as cofactor.

The enzyme catalyses chlorophyllide a + oxidized 2[4Fe-4S]-[ferredoxin] + 2 ADP + 2 phosphate = protochlorophyllide a + reduced 2[4Fe-4S]-[ferredoxin] + 2 ATP + 2 H2O. The protein operates within porphyrin-containing compound metabolism; bacteriochlorophyll biosynthesis (light-independent). In terms of biological role, component of the dark-operative protochlorophyllide reductase (DPOR) that uses Mg-ATP and reduced ferredoxin to reduce ring D of protochlorophyllide (Pchlide) to form chlorophyllide a (Chlide). This reaction is light-independent. The NB-protein (BchN-BchB) is the catalytic component of the complex. The polypeptide is Light-independent protochlorophyllide reductase subunit B (Rhodospirillum rubrum (strain ATCC 11170 / ATH 1.1.1 / DSM 467 / LMG 4362 / NCIMB 8255 / S1)).